The chain runs to 92 residues: Elongation factor 1-beta (92 aa).

The protein belongs to the EF-1-beta/EF-1-delta family.

Functionally, promotes the exchange of GDP for GTP in EF-1-alpha/GDP, thus allowing the regeneration of EF-1-alpha/GTP that could then be used to form the ternary complex EF-1-alpha/GTP/AAtRNA. This chain is Elongation factor 1-beta (ef1b), found in Pyrobaculum aerophilum (strain ATCC 51768 / DSM 7523 / JCM 9630 / CIP 104966 / NBRC 100827 / IM2).